Here is a 236-residue protein sequence, read N- to C-terminus: Heme oxygenase (236 aa).

His-17 serves as a coordination point for heme b.

It belongs to the heme oxygenase family.

The protein localises to the plastid. It is found in the chloroplast. It catalyses the reaction heme b + 3 reduced [NADPH--hemoprotein reductase] + 3 O2 = biliverdin IXalpha + CO + Fe(2+) + 3 oxidized [NADPH--hemoprotein reductase] + 3 H2O + H(+). In terms of biological role, catalyzes the opening of the heme ring with the release of iron. Key enzyme in the synthesis of the chromophoric part of the photosynthetic antennae. This is Heme oxygenase (pbsA) from Porphyra purpurea (Red seaweed).